The sequence spans 581 residues: DNA primase (581 aa).

The CHC2-type zinc-finger motif lies at 40-64 (CPFHNEKTPSFTVNGEKQFYHCFGC). The region spanning 259–341 (NRLLVVEGYM…GRQLRFMFLP (83 aa)) is the Toprim domain. 3 residues coordinate Mg(2+): E265, D309, and D311.

It belongs to the DnaG primase family. Monomer. Interacts with DnaB. Zn(2+) is required as a cofactor. Mg(2+) serves as cofactor.

It carries out the reaction ssDNA + n NTP = ssDNA/pppN(pN)n-1 hybrid + (n-1) diphosphate.. RNA polymerase that catalyzes the synthesis of short RNA molecules used as primers for DNA polymerase during DNA replication. The sequence is that of DNA primase from Escherichia coli O6:H1 (strain CFT073 / ATCC 700928 / UPEC).